Consider the following 976-residue polypeptide: Protein phosphatase 1 regulatory subunit 12B (976 aa).

The span at methionine 1 to arginine 24 shows a compositional bias: basic and acidic residues. The tract at residues methionine 1 to proline 52 is disordered. Serine 29 carries the phosphoserine modification. ANK repeat units lie at residues glutamate 57–threonine 86, aspartate 90–glutamine 119, glutamate 123–isoleucine 152, serine 216–valine 245, and aspartate 249–isoleucine 278. A disordered region spans residues glutamate 342–asparagine 489. A compositionally biased stretch (acidic residues) spans serine 362–serine 374. Over residues glutamate 375–glutamate 385 the composition is skewed to basic and acidic residues. A compositionally biased stretch (low complexity) spans phenylalanine 411–phenylalanine 423. Residue threonine 444 is modified to Phosphothreonine. A compositionally biased stretch (low complexity) spans serine 465–serine 477. Residues leucine 480–asparagine 489 are compositionally biased toward basic and acidic residues. Serine 502 is modified (phosphoserine). The interval serine 503–asparagine 873 is disordered. A compositionally biased stretch (polar residues) spans glutamate 538–serine 564. Basic and acidic residues predominate over residues valine 622–arginine 631. Positions lysine 632–arginine 642 are enriched in basic residues. Residue threonine 645 is modified to Phosphothreonine. Residues glutamate 655–aspartate 679 are compositionally biased toward basic and acidic residues. 2 stretches are compositionally biased toward polar residues: residues aspartate 722–threonine 739 and serine 747–alanine 763. The span at alanine 765 to alanine 777 shows a compositional bias: basic and acidic residues. Residues glutamate 791–glycine 801 are compositionally biased toward basic residues. Phosphothreonine is present on threonine 802. Positions glutamate 818 to arginine 830 are enriched in basic and acidic residues. Residue serine 833 is modified to Phosphoserine. The span at tyrosine 844–arginine 860 shows a compositional bias: basic and acidic residues. Serine 941 is modified (phosphoserine).

PP1 comprises a catalytic subunit, PPP1CA, PPP1CB or PPP1CC, and one or several targeting or regulatory subunits. PPP1R12B mediates binding to myosin. Isoform 3 and isoform 4 bind PPP1R12A, but not isoform 1 of PPP1R12B itself. Binds IL16.

The protein resides in the cytoplasm. The protein localises to the cytoskeleton. It localises to the stress fiber. Regulates myosin phosphatase activity. Augments Ca(2+) sensitivity of the contractile apparatus. This Mus musculus (Mouse) protein is Protein phosphatase 1 regulatory subunit 12B (Ppp1r12b).